The following is a 66-amino-acid chain: MWKVNDQGFLNITVTGTKFNLIAITGKLGFYTDPPSHLMIMPLKIFPVHKFSKNEPNKKQKRFIYF.

Residue asparagine 11 is glycosylated (N-linked (GlcNAc...) asparagine; by host).

Belongs to the asfivirus I177L family.

The protein localises to the virion. The protein is Protein I177L of African swine fever virus (strain Badajoz 1971 Vero-adapted) (Ba71V).